The chain runs to 406 residues: 4-hydroxy-3-methylbut-2-en-1-yl diphosphate synthase (flavodoxin) (406 aa).

The [4Fe-4S] cluster site is built by Cys-297, Cys-300, Cys-343, and Glu-350.

Belongs to the IspG family. Requires [4Fe-4S] cluster as cofactor.

The catalysed reaction is (2E)-4-hydroxy-3-methylbut-2-enyl diphosphate + oxidized [flavodoxin] + H2O + 2 H(+) = 2-C-methyl-D-erythritol 2,4-cyclic diphosphate + reduced [flavodoxin]. It functions in the pathway isoprenoid biosynthesis; isopentenyl diphosphate biosynthesis via DXP pathway; isopentenyl diphosphate from 1-deoxy-D-xylulose 5-phosphate: step 5/6. Its function is as follows. Converts 2C-methyl-D-erythritol 2,4-cyclodiphosphate (ME-2,4cPP) into 1-hydroxy-2-methyl-2-(E)-butenyl 4-diphosphate. The polypeptide is 4-hydroxy-3-methylbut-2-en-1-yl diphosphate synthase (flavodoxin) (Thermus thermophilus (strain ATCC 27634 / DSM 579 / HB8)).